The sequence spans 81 residues: Sulfur carrier protein TusA (81 aa).

Cys-19 serves as the catalytic Cysteine persulfide intermediate.

The protein belongs to the sulfur carrier protein TusA family. As to quaternary structure, interacts with IscS.

Its subcellular location is the cytoplasm. It functions in the pathway tRNA modification. Sulfur carrier protein involved in sulfur trafficking in the cell. Part of a sulfur-relay system required for 2-thiolation during synthesis of 2-thiouridine of the modified wobble base 5-methylaminomethyl-2-thiouridine (mnm(5)s(2)U) in tRNA. Interacts with IscS and stimulates its cysteine desulfurase activity. Accepts an activated sulfur from IscS, which is then transferred to TusD, and thus determines the direction of sulfur flow from IscS to 2-thiouridine formation. Also appears to be involved in sulfur transfer for the biosynthesis of molybdopterin. In Erwinia tasmaniensis (strain DSM 17950 / CFBP 7177 / CIP 109463 / NCPPB 4357 / Et1/99), this protein is Sulfur carrier protein TusA.